A 520-amino-acid polypeptide reads, in one-letter code: Ribonuclease Y (520 aa).

Residues 3–23 (IELAIIFIVLAAGAGFLIGNL) traverse the membrane as a helical segment. In terms of domain architecture, KH spans 210–273 (TVSVVALPSD…EVAKIALEKL (64 aa)). Residues 336 to 429 (VYQHSLEVAF…VQAADALSGA (94 aa)) enclose the HD domain.

Belongs to the RNase Y family.

The protein localises to the cell membrane. Endoribonuclease that initiates mRNA decay. This is Ribonuclease Y from Geobacter sulfurreducens (strain ATCC 51573 / DSM 12127 / PCA).